The following is a 319-amino-acid chain: Meiotic drive suppressor wtf16 (319 aa).

Disordered regions lie at residues 1–22 (MKNN…KTGH) and 35–68 (DSEE…RSTD). Helical transmembrane passes span 73–93 (FLIK…LAIC), 110–130 (WTLF…LTYF), 153–173 (VVII…CIKF), 187–207 (CSIS…FWTL), 215–235 (FQVL…MYLF), and 241–261 (ATGY…FFFY).

This sequence belongs to the WTF family. Homomer. Interacts with other proteins that exhibit high sequence similarity.

Its subcellular location is the spore membrane. It localises to the vacuole membrane. Its function is as follows. Acts as a suppressor component of the dual wtf meiotic drive system, and can suppress but not confer meiotic drive by compatible poisons. Wtf meiotic drive systems promote unequal transmission of alleles from the parental zygote to progeny spores by encoding a poison and an antidote from the same locus; the poison is trans-acting and forms toxic aggregates in all spores within an ascus, wherease the antidote is spore-specific and targets aggregates for degradation by the vacuole. Meiotic drive by wtf systems therefore lead to poisoning of all progeny that do not inherit the dual poison/antidote allele, or express a compatible antidote. The chain is Meiotic drive suppressor wtf16 from Schizosaccharomyces pombe (strain 972 / ATCC 24843) (Fission yeast).